We begin with the raw amino-acid sequence, 450 residues long: UDP-N-acetylmuramoylalanine--D-glutamate ligase (450 aa).

Residue 119 to 125 coordinates ATP; the sequence is GSNGKTT.

This sequence belongs to the MurCDEF family.

The protein resides in the cytoplasm. It catalyses the reaction UDP-N-acetyl-alpha-D-muramoyl-L-alanine + D-glutamate + ATP = UDP-N-acetyl-alpha-D-muramoyl-L-alanyl-D-glutamate + ADP + phosphate + H(+). It functions in the pathway cell wall biogenesis; peptidoglycan biosynthesis. Cell wall formation. Catalyzes the addition of glutamate to the nucleotide precursor UDP-N-acetylmuramoyl-L-alanine (UMA). This is UDP-N-acetylmuramoylalanine--D-glutamate ligase from Streptococcus pneumoniae (strain ATCC BAA-255 / R6).